The chain runs to 63 residues: Small ribosomal subunit protein eS31 (63 aa).

Zn(2+) contacts are provided by Cys34, Cys37, Cys53, and Cys56. The C4-type zinc-finger motif lies at 34-56 (CPKCGSVMAFHREPVPRWHCGKC).

Belongs to the eukaryotic ribosomal protein eS31 family. As to quaternary structure, part of the 30S ribosomal subunit. The cofactor is Zn(2+).

In Pyrobaculum neutrophilum (strain DSM 2338 / JCM 9278 / NBRC 100436 / V24Sta) (Thermoproteus neutrophilus), this protein is Small ribosomal subunit protein eS31.